The following is a 168-amino-acid chain: MLAKSGFKIVLNGCLNDRGDNLAHYFSRQGDVIDLIALKEVINDDNRHLLLDYNFSQRQCVHIVVCEDKVNAIKKLKVLLEMGADINGQERKGGNTPLHLAVHSNNYKLVKWLCKQPSINKTALNYAQKTPHDIAIERIEKKINNALMEQKKWYKIMHPSGADLSEEE.

ANK repeat units lie at residues 56 to 88 (SQRQ…DING) and 93 to 123 (GGNT…NKTA).

The protein belongs to the polydnaviridae I-Kappa-B-like protein family.

Functionally, suppresses the host immune response through NF-kappa-B inactivation. Possesses ankyrin repeat domains required for NF-kappa-B binding but lacks the regulatory regions required for dissociation from NF-kappa-B and degradation. Therefore, prevents host NF-kappa-B release and subsequent activation. The polypeptide is I-Kappa-B like protein G2 (G4) (Microplitis demolitor (Parasitoid wasp)).